A 305-amino-acid chain; its full sequence is Nod factor export ATP-binding protein I (305 aa).

Residues 8–237 enclose the ABC transporter domain; that stretch reads IDLVGVRKSF…HIGCNVIEIY (230 aa). 40–47 provides a ligand contact to ATP; sequence GPNGAGKS.

The protein belongs to the ABC transporter superfamily. Lipooligosaccharide exporter (TC 3.A.1.102) family. In terms of assembly, the complex is composed of two ATP-binding proteins (NodI) and two transmembrane proteins (NodJ).

The protein resides in the cell inner membrane. Functionally, part of the ABC transporter complex NodIJ involved in the export of the nodulation factors (Nod factors), the bacterial signal molecules that induce symbiosis and subsequent nodulation induction. Nod factors are LCO (lipo-chitin oligosaccharide), a modified beta-1,4-linked N-acetylglucosamine oligosaccharide. This subunit is responsible for energy coupling to the transport system. The sequence is that of Nod factor export ATP-binding protein I from Bradyrhizobium sp. (strain SNU001).